Here is a 209-residue protein sequence, read N- to C-terminus: 8-oxoguanine DNA glycosylase/AP lyase (209 aa).

Active-site residues include K131 and D149.

The protein belongs to the type-2 OGG1 family.

It carries out the reaction 2'-deoxyribonucleotide-(2'-deoxyribose 5'-phosphate)-2'-deoxyribonucleotide-DNA = a 3'-end 2'-deoxyribonucleotide-(2,3-dehydro-2,3-deoxyribose 5'-phosphate)-DNA + a 5'-end 5'-phospho-2'-deoxyribonucleoside-DNA + H(+). Functionally, catalyzes the excision of an oxidatively damaged form of guanine (7,8-dihydro-8-oxoguanine = 8-oxoG) from DNA. Also cleaves the DNA backbone at apurinic/apyrimidinic sites (AP sites). This is 8-oxoguanine DNA glycosylase/AP lyase from Korarchaeum cryptofilum (strain OPF8).